A 347-amino-acid polypeptide reads, in one-letter code: 5-deoxyribose 1-phosphate isomerase (347 aa).

Substrate is bound by residues 48 to 50 (RGA), R91, and Q198. D239 acts as the Proton donor in catalysis. Residue 249 to 250 (NK) participates in substrate binding.

This sequence belongs to the EIF-2B alpha/beta/delta subunits family. DrdI subfamily.

It catalyses the reaction 5-deoxy-alpha-D-ribose 1-phosphate = 5-deoxy-D-ribulose 1-phosphate. It participates in carbohydrate degradation. In terms of biological role, catalyzes the isomerization of 5-deoxy-alpha-D-ribose 1-phosphate to 5-deoxy-D-ribulose 1-phosphate, as part of a 5-deoxyribose salvage pathway that recycles this toxic radical SAM enzyme by-product to mainstream metabolites. The polypeptide is 5-deoxyribose 1-phosphate isomerase (Bacillus thuringiensis (strain Al Hakam)).